A 118-amino-acid polypeptide reads, in one-letter code: Melanoma antigen recognized by T-cells 1 (118 aa).

A helical membrane pass occupies residues 27 to 47 (AAGIGILTVILGVLLLIGCWY). Residues 48 to 118 (CRRRNGYRAL…AEQSPPPYSP (71 aa)) lie on the Cytoplasmic side of the membrane. Positions 78-118 (GFDHRDSKVSLQEKNCEPVVPNAPPAYEKLSAEQSPPPYSP) are disordered. At Ser108 the chain carries Phosphoserine.

In terms of assembly, interacts with PMEL. Interacts with GPR143. Acylated. In terms of tissue distribution, expression is restricted to melanoma and melanocyte cell lines and retina.

The protein localises to the endoplasmic reticulum membrane. Its subcellular location is the golgi apparatus. It is found in the trans-Golgi network membrane. It localises to the melanosome. Functionally, involved in melanosome biogenesis by ensuring the stability of GPR143. Plays a vital role in the expression, stability, trafficking, and processing of melanocyte protein PMEL, which is critical to the formation of stage II melanosomes. The polypeptide is Melanoma antigen recognized by T-cells 1 (MLANA) (Homo sapiens (Human)).